A 1012-amino-acid polypeptide reads, in one-letter code: F-box DNA helicase 1 (1012 aa).

The segment at 1 to 54 (MHLTADDCEALSRSTEGLSSLTQPLNQRRSRGDVNRGLQPTHRTRTQPGAQGRQ) is disordered. Polar residues predominate over residues 12–27 (SRSTEGLSSLTQPLNQ). Residues 185–234 (QGSIEDLPDEVLRSIFAFLPVTDLYQSLSLVCRRWRIIVGDPWFIPWKKL) enclose the F-box domain. Residues 427–692 (THEQQRILNH…YYLTQSFRFG (266 aa)) form the UvrD-like helicase ATP-binding domain. 448–455 (AFAGTGKT) is a binding site for ATP.

This sequence belongs to the helicase family. UvrD subfamily. As to quaternary structure, part of the SCF (SKP1-CUL1-F-box) E3 ubiquitin-protein ligase complex SCF(FBH1).

The protein resides in the nucleus. It localises to the chromosome. It carries out the reaction Couples ATP hydrolysis with the unwinding of duplex DNA by translocating in the 3'-5' direction.. It catalyses the reaction ATP + H2O = ADP + phosphate + H(+). It participates in protein modification; protein ubiquitination. Its function is as follows. 3'-5' DNA helicase and substrate-recognition component of the SCF(FBH1) E3 ubiquitin ligase complex that plays a key role in response to stalled/damaged replication forks. Involved in genome maintenance by acting as an anti-recombinogenic helicase and preventing extensive strand exchange during homologous recombination: promotes RAD51 filament dissolution from stalled forks, thereby inhibiting homologous recombination and preventing excessive recombination. Also promotes cell death and DNA double-strand breakage in response to replication stress: promotes the endonucleolytic DNA cleavage following prolonged replication stress via its helicase activity, possibly to eliminate cells with excessive replication stress. The protein is F-box DNA helicase 1 of Gallus gallus (Chicken).